Consider the following 931-residue polypeptide: Chitin synthase III (931 aa).

Residues asparagine 37 and asparagine 94 are each glycosylated (N-linked (GlcNAc...) asparagine). The disordered stretch occupies residues 93 to 154 (PNASQLPPAG…PGGVGQAGGL (62 aa)). A compositionally biased stretch (gly residues) spans 102–122 (GSGGFGDNGFGQYGQPQGFGG). The N-linked (GlcNAc...) asparagine glycan is linked to asparagine 558. The next 5 membrane-spanning stretches (helical) occupy residues 585–605 (FFLH…WFSL), 644–664 (IINA…FILA), 677–697 (IASF…SGYL), 731–751 (VILI…FLYL), and 759–779 (SFPY…VYAF). A glycan (N-linked (GlcNAc...) asparagine) is linked at asparagine 802. Transmembrane regions (helical) follow at residues 858 to 878 (TGLV…ITSD) and 899 to 919 (FLLY…LWFL).

This sequence belongs to the chitin synthase family. Class III subfamily. As to expression, highly expressed in conidia and during appressorium formation.

The protein resides in the cell membrane. The enzyme catalyses [(1-&gt;4)-N-acetyl-beta-D-glucosaminyl](n) + UDP-N-acetyl-alpha-D-glucosamine = [(1-&gt;4)-N-acetyl-beta-D-glucosaminyl](n+1) + UDP + H(+). In terms of biological role, polymerizes chitin, a structural polymer of the cell wall and septum, by transferring the sugar moiety of UDP-GlcNAc to the non-reducing end of the growing chitin polymer. Contributes to the production of conidia and the ability of fungal conidia to germinate. Involved in the fungal cell wall integrity and the ability of conidia to withstand biophysical pressure. Required for appressorium formation and evasion of insect cellular and/or humoral defenses, promoting the fungal dimorphic transition to the production of hyphal bodies that occurs within hosts, and ultimately to virulence. This chain is Chitin synthase III, found in Metarhizium acridum (strain CQMa 102).